Reading from the N-terminus, the 257-residue chain is Deoxyribose-phosphate aldolase (257 aa).

D102 serves as the catalytic Proton donor/acceptor. K166 functions as the Schiff-base intermediate with acetaldehyde in the catalytic mechanism. Catalysis depends on K198, which acts as the Proton donor/acceptor.

The protein belongs to the DeoC/FbaB aldolase family. DeoC type 2 subfamily.

It is found in the cytoplasm. It carries out the reaction 2-deoxy-D-ribose 5-phosphate = D-glyceraldehyde 3-phosphate + acetaldehyde. Its pathway is carbohydrate degradation; 2-deoxy-D-ribose 1-phosphate degradation; D-glyceraldehyde 3-phosphate and acetaldehyde from 2-deoxy-alpha-D-ribose 1-phosphate: step 2/2. Catalyzes a reversible aldol reaction between acetaldehyde and D-glyceraldehyde 3-phosphate to generate 2-deoxy-D-ribose 5-phosphate. This Aeromonas salmonicida (strain A449) protein is Deoxyribose-phosphate aldolase.